A 385-amino-acid polypeptide reads, in one-letter code: Benzoylsuccinyl-CoA thiolase subunit BbsB (385 aa).

Residue R19 coordinates CoA. C84 (acyl-thioester intermediate) is an active-site residue. Residues G121, R193, C204, and C205 each coordinate CoA.

It belongs to the thiolase-like superfamily. Thiolase family. Heterotetramer composed of two BbsA subunits and two BbsB subunits. BbsB forms homodimeric subcomplexes. Both BbsA and BbsB are essential for enzymatic activity.

The catalysed reaction is (S)-2-benzoylsuccinyl-CoA + CoA = benzoyl-CoA + succinyl-CoA. It functions in the pathway xenobiotic degradation; toluene degradation. Component of the BbsAB thiolase complex, which catalyzes the thiolytic cleavage of (S)-2-benzoylsuccinyl-CoA to succinyl-CoA and benzoyl-CoA, the final step of anaerobic toluene metabolism. The chain is Benzoylsuccinyl-CoA thiolase subunit BbsB from Thauera aromatica.